Reading from the N-terminus, the 427-residue chain is uncharacterized protein (427 aa).

It belongs to the CAF1 family.

This is an uncharacterized protein from Schizosaccharomyces pombe (strain 972 / ATCC 24843) (Fission yeast).